The sequence spans 336 residues: HTH-type transcriptional regulator SyrM (336 aa).

Positions 41 to 98 (IDLNLLVALEALLEYRNVTHAGQHIGRSQPAMSRALGRLRGLFNDDLLVRSSTGLIPT) constitute an HTH lysR-type domain. A DNA-binding region (H-T-H motif) is located at residues 58–77 (VTHAGQHIGRSQPAMSRALG).

It belongs to the LysR transcriptional regulatory family.

Functionally, acts in trans to stimulate nod gene expression via nodD3 and exo gene expression via SyrA. The chain is HTH-type transcriptional regulator SyrM (syrM) from Rhizobium etli.